Consider the following 507-residue polypeptide: 2,3-bisphosphoglycerate-independent phosphoglycerate mutase (507 aa).

Mn(2+) is bound by residues D11 and S61. S61 functions as the Phosphoserine intermediate in the catalytic mechanism. Substrate is bound by residues H122, 152 to 153 (RD), R183, R189, 258 to 261 (RNDR), and K332. Mn(2+) contacts are provided by D399, H403, D440, H441, and H458.

This sequence belongs to the BPG-independent phosphoglycerate mutase family. Monomer. Mn(2+) is required as a cofactor.

The catalysed reaction is (2R)-2-phosphoglycerate = (2R)-3-phosphoglycerate. Its pathway is carbohydrate degradation; glycolysis; pyruvate from D-glyceraldehyde 3-phosphate: step 3/5. Catalyzes the interconversion of 2-phosphoglycerate and 3-phosphoglycerate. The protein is 2,3-bisphosphoglycerate-independent phosphoglycerate mutase of Parabacteroides distasonis (strain ATCC 8503 / DSM 20701 / CIP 104284 / JCM 5825 / NCTC 11152).